A 396-amino-acid polypeptide reads, in one-letter code: SVPVGETTLGRIFNVLGEPVDNLGPVQNSTTFPIHRSAPAFTQLDTKLSIFETGIKVVDLLAPYRRGGKIGLFGGAGVGKTVLIMELINNIAKAHGGVSVSGGVGERTREGNDLYMETKESKVINEQNIAESKVALVYGQMNEPPGARMRVGLTASTMAEYFRDINKRDVLLFIDNIFRFVQAGSEVSALLGRMPSAVGYQPTLGTEMGSLQERITSTKEGSITSIQAVYVPADDLTDPAPATTFAHLDATTVLSRGLAAKGIYPAVDPLDSTSTMLQPWIVGEEHYETAQGVKQTLQRYKELQDIIAIPGLDELSEEDRLTVARARKIERFLSQPFFVAEVFTGSPGKYVSLPETIKGFQMILPGELDNLPEQASYLVGNIDEAAAKAAALQAGG.

74–81 lines the ATP pocket; the sequence is GGAGVGKT.

It belongs to the ATPase alpha/beta chains family. As to quaternary structure, F-type ATPases have 2 components, CF(1) - the catalytic core - and CF(0) - the membrane proton channel. CF(1) has five subunits: alpha(3), beta(3), gamma(1), delta(1), epsilon(1). CF(0) has four main subunits: a(1), b(1), b'(1) and c(9-12).

Its subcellular location is the plastid. The protein resides in the chloroplast thylakoid membrane. The enzyme catalyses ATP + H2O + 4 H(+)(in) = ADP + phosphate + 5 H(+)(out). Produces ATP from ADP in the presence of a proton gradient across the membrane. The catalytic sites are hosted primarily by the beta subunits. In Adiantum raddianum (Maidenhair fern), this protein is ATP synthase subunit beta, chloroplastic.